A 284-amino-acid polypeptide reads, in one-letter code: Four and a half LIM domains protein 5 (284 aa).

The segment at 8 to 32 (CQYCTSSLIGKKYVLKDDNLYCISC) adopts a C4-type zinc-finger fold. 3 LIM zinc-binding domains span residues 39 to 100 (NYCE…ECSS), 101 to 160 (KCFH…KEFA), and 161 to 220 (HYCN…LYAK).

Interacts with CREM (via the third LIM domain). Interacts (via second LIM domain) with SPAG8. As to expression, testis-specific, temporal expression is coordinated with CREM.

Its subcellular location is the nucleus. In terms of biological role, may be involved in the regulation of spermatogenesis. Stimulates CREM transcriptional activity in a phosphorylation-independent manner. This is Four and a half LIM domains protein 5 (Fhl5) from Mus musculus (Mouse).